Reading from the N-terminus, the 490-residue chain is UDP-glycosyltransferase 73C7 (490 aa).

UDP-alpha-D-glucose contacts are provided by residues Ser-291, Ala-351–Gln-353, His-368–Glu-376, and Phe-390–Gln-393.

Belongs to the UDP-glycosyltransferase family.

This is UDP-glycosyltransferase 73C7 (UGT73C7) from Arabidopsis thaliana (Mouse-ear cress).